Reading from the N-terminus, the 247-residue chain is Mitochondrial inner membrane protease ATP23 (247 aa).

H146 is an a divalent metal cation binding site. Residue E147 is part of the active site. Position 150 (H150) interacts with a divalent metal cation.

The protein belongs to the peptidase M76 family.

It is found in the mitochondrion inner membrane. In terms of biological role, has a dual role in the assembly of mitochondrial ATPase. Acts as a protease that removes N-terminal residues of mitochondrial ATPase CF(0) subunit 6 at the intermembrane space side. Also involved in the correct assembly of the membrane-embedded ATPase CF(0) particle, probably mediating association of subunit 6 with the subunit 9 ring. This Eremothecium gossypii (strain ATCC 10895 / CBS 109.51 / FGSC 9923 / NRRL Y-1056) (Yeast) protein is Mitochondrial inner membrane protease ATP23 (ATP23).